Here is a 415-residue protein sequence, read N- to C-terminus: MQTSDRDLSGPEASPSGMPEVLSECPPAPTKSAAFDLFNLVLSYKRLEIYLEPLKDAGDGVRYLLRWQMPLCSLLTCLGLNILFLTLNEGAWYSMGALMISVPALLGYLQEVCRGQLPESELMRRKYHSIRQEDLQRVRLSRVHLSRPEAVAEVKSFLIQLEAFLARLCYTCESAYRVLHWENPVVSSQFYGALLGMVCMLYLLPLCWVLALLNSTLFLGNGDFFRVVCEYRACLQRRMNPRQEECACESSALQGAGGRGLLDSSPAPTPTEDLTPGSVEEAEEAEPDEEFKDAIEETHLVVLEDEEGTPCPAEDELTLQDNGFLSKNEVLRSKVSRLTERLRKRYPTNNFGNCAGCAATFSVLKKRRSCSNCGNSFCSRCCSFKVPRSSMGATAPEAQRETVCVCASCNQTLSK.

Positions 1 to 24 (MQTSDRDLSGPEASPSGMPEVLSE) are disordered. Over 1–66 (MQTSDRDLSG…AGDGVRYLLR (66 aa)) the chain is Cytoplasmic. The tract at residues 1–92 (MQTSDRDLSG…LFLTLNEGAW (92 aa)) is sufficient for homooligomerization. The tract at residues 1 to 210 (MQTSDRDLSG…LYLLPLCWVL (210 aa)) is sufficient for localization to endoplasmic reticulum tubular network and for interactions with REEP1, REEP5, ATL1, ATL2, ATL3 and SPAST. Residues 51–64 (LEPLKDAGDGVRYL) are necessary for interaction with RAB11A and function in neurite outgrowth. Residues 67 to 87 (WQMPLCSLLTCLGLNILFLTL) form a helical membrane-spanning segment. A topological domain (lumenal) is located at residue Asn-88. The helical transmembrane segment at 89-109 (EGAWYSMGALMISVPALLGYL) threads the bilayer. Topologically, residues 110–192 (QEVCRGQLPE…NPVVSSQFYG (83 aa)) are cytoplasmic. The helical intramembrane region spans 193–213 (ALLGMVCMLYLLPLCWVLALL). The Cytoplasmic portion of the chain corresponds to 214-415 (NSTLFLGNGD…CASCNQTLSK (202 aa)). Positions 254 to 290 (QGAGGRGLLDSSPAPTPTEDLTPGSVEEAEEAEPDEE) are disordered. Residues 275–365 (TPGSVEEAEE…GCAATFSVLK (91 aa)) form a necessary for interaction with KIF5A region. Acidic residues predominate over residues 280-290 (EEAEEAEPDEE). Positions 290 to 296 (EFKDAIE) are necessary for interaction with VAPA. The FYVE-type zinc-finger motif lies at 348–414 (TNNFGNCAGC…VCASCNQTLS (67 aa)). Zn(2+) contacts are provided by Cys-354, Cys-357, Cys-370, Cys-373, Cys-378, Cys-381, Cys-406, and Cys-409.

Can form homooligomers (monomers, dimers and tetramers). Interacts with RAB11A (GDP-bound form); regulates RAB11A. Interacts with FKBP8; may negatively regulate ZFYVE27 phosphorylation. Isoform 1 interacts to a greater extent than isoform 2 with VAPB (via MSP domain). Isoform 1 interacts to a greater extent than isoform 2 with VAPA (via MSP domain). Interaction with VAPA may regulate ZFYVE27 retention in the endoplasmic reticulum and its function in cell projections formation. Interacts with ATL2, ATL3, SPAST and RTN3. Interacts with REEP1, REEP5 and ATL1. Interacts with RAB11B (GDP-bound form), SURF4, KIF5B and KIF5C. Isoform 1 and 2 interact with KIFA. Phosphorylated. Phosphorylation is induced by NGF through the MAPK/ERK pathway and modulates interaction with RAB11A. In terms of tissue distribution, astrocytes express both isoform 1 and isoform 2 and oligodendrocytes express only isoform 2 (at protein level). Isoform 1 is expressed specifically in the central nervous system and selectively in neuronal cells. Isoform 2 is expressed in cerebrum, cerebellum, spinal cord, heart, thymus, spleen, intestine and lung.

It is found in the recycling endosome membrane. It localises to the endoplasmic reticulum membrane. The protein localises to the cell projection. Its subcellular location is the growth cone membrane. Key regulator of RAB11-dependent vesicular trafficking during neurite extension through polarized membrane transport. Promotes axonal elongation and contributes to the establishment of neuronal cell polarity. Involved in nerve growth factor-induced neurite formation in VAPA-dependent manner. Contributes to both the formation and stabilization of the tubular ER network. Involved in ER morphogenesis by regulating the sheet-to-tubule balance and possibly the density of tubule interconnections. Acts as an adapter protein that facilitates the interaction of KIF5A with VAPA, VAPB, SURF4, RAB11A, RAB11B and RTN3 and the ZFYVE27-KIF5A complex contributes to the transport of these proteins in neurons. Can induce formation of neurite-like membrane protrusions in non-neuronal cells in a KIF5A/B-dependent manner. The polypeptide is Protrudin (Zfyve27) (Mus musculus (Mouse)).